The sequence spans 401 residues: UPF0242 protein CPn_0755/CP_1117/CPj0755/CpB0783 (401 aa).

Belongs to the UPF0242 family.

The protein is UPF0242 protein CPn_0755/CP_1117/CPj0755/CpB0783 of Chlamydia pneumoniae (Chlamydophila pneumoniae).